We begin with the raw amino-acid sequence, 335 residues long: Ornithine carbamoyltransferase 2, catabolic (335 aa).

Carbamoyl phosphate-binding positions include 62–65 (STRT), Q89, R113, and 140–143 (HPTQ). Residues N172, D236, and 240–241 (SM) each bind L-ornithine. Residues 277–278 (CL) and R322 each bind carbamoyl phosphate.

It belongs to the aspartate/ornithine carbamoyltransferase superfamily. OTCase family.

The protein resides in the cytoplasm. It carries out the reaction carbamoyl phosphate + L-ornithine = L-citrulline + phosphate + H(+). The protein operates within amino-acid degradation; L-arginine degradation via ADI pathway; carbamoyl phosphate from L-arginine: step 2/2. Reversibly catalyzes the transfer of the carbamoyl group from carbamoyl phosphate (CP) to the N(epsilon) atom of ornithine (ORN) to produce L-citrulline. The polypeptide is Ornithine carbamoyltransferase 2, catabolic (arcB2) (Staphylococcus epidermidis (strain ATCC 12228 / FDA PCI 1200)).